The following is a 402-amino-acid chain: MEQKIAIALKEIARGTNEIIGLEYIEKLVRKYYETNERFIVKAGFDPTAPDLHLGHTVLIQKLALLQQYGARVKFLIGDFTAMIGDPTGKNETRKPLNREQVLENAKTYEEQIYKILDEKHTEVCFNSTWLDALGAKGMIELCAKFSVARMLERDDFTKRYKENRPISIVEFLYPLLQGYDSVAMDADIELGGNDQKFNLLVGRFLQRAYGLNKEQSVITMPLLEGLDGVQKMSKSLGNYVGITEEPNAMFGKIMSVSDDLMWRYYTLLSTKTLEEIEDLKHGILNQTLHPKAVKEDLASEIVARYYDNDQAIKAKEQFSKVFSANLLPEILSESDFDEGVGILDVLKQIGFCPSTSQARRDIQGGGVKINQEVIKNESYRFVKGNYVIQLGKKRFMKLNIN.

Residues 47 to 56 (PTAPDLHLGH) carry the 'HIGH' region motif. The short motif at 232 to 236 (KMSKS) is the 'KMSKS' region element. K235 lines the ATP pocket. One can recognise an S4 RNA-binding domain in the interval 341-401 (VGILDVLKQI…GKKRFMKLNI (61 aa)).

Belongs to the class-I aminoacyl-tRNA synthetase family. TyrS type 2 subfamily. As to quaternary structure, homodimer.

It localises to the cytoplasm. The catalysed reaction is tRNA(Tyr) + L-tyrosine + ATP = L-tyrosyl-tRNA(Tyr) + AMP + diphosphate + H(+). In terms of biological role, catalyzes the attachment of tyrosine to tRNA(Tyr) in a two-step reaction: tyrosine is first activated by ATP to form Tyr-AMP and then transferred to the acceptor end of tRNA(Tyr). The polypeptide is Tyrosine--tRNA ligase (Helicobacter pylori (strain ATCC 700392 / 26695) (Campylobacter pylori)).